Reading from the N-terminus, the 597-residue chain is Probable HECT-type ubiquitin ligase-interacting protein creD (597 aa).

Disordered regions lie at residues E375–S398 and L432–P499. Residues T443–R455 show a composition bias toward basic and acidic residues. Residues P465 to R481 are compositionally biased toward low complexity. Residues R482–V492 are compositionally biased toward basic and acidic residues.

It belongs to the arrestin family. As to quaternary structure, interacts with hulA.

Its function is as follows. Component of the regulatory network controlling carbon source utilization through ubiquitination and deubiquitination involving creA, creB, creC, creD and acrB. May be involved in signaling by recognizing appropriately phosphorylated substrates via its arrestin domains and then recruit a HECT-type ubiquitin ligase such as hulA, leading to ubiquitination of the substrate, providing a link between ubiquitination and phosphorylation in protein regulation and stability. The sequence is that of Probable HECT-type ubiquitin ligase-interacting protein creD (creD) from Aspergillus oryzae (strain ATCC 42149 / RIB 40) (Yellow koji mold).